Consider the following 56-residue polypeptide: Large ribosomal subunit protein eL24 (56 aa).

Zn(2+)-binding residues include cysteine 6, cysteine 9, cysteine 32, and cysteine 36. The C4-type zinc finger occupies 6 to 36 (CSFCNTRITPGTGKLYAKKDGTVYYFCSSKC).

This sequence belongs to the eukaryotic ribosomal protein eL24 family. In terms of assembly, part of the 50S ribosomal subunit. Forms a cluster with proteins L3 and L14. Zn(2+) is required as a cofactor.

Its function is as follows. Binds to the 23S rRNA. In Methanothrix thermoacetophila (strain DSM 6194 / JCM 14653 / NBRC 101360 / PT) (Methanosaeta thermophila), this protein is Large ribosomal subunit protein eL24.